Here is a 295-residue protein sequence, read N- to C-terminus: Ribosome production factor 1 (295 aa).

Residues H24 to L47 form a disordered region. The span at A38 to L47 shows a compositional bias: basic and acidic residues. Positions P93 to E276 constitute a Brix domain. The segment at V254 to Q271 is RNA-binding.

As to quaternary structure, part of a complex that includes BRX1, RPF1, RPF2 and SSF1 or SSF2.

It is found in the nucleus. It localises to the nucleolus. Essential protein. Required for biogenesis of the 60S ribosomal subunit. The chain is Ribosome production factor 1 (RPF1) from Saccharomyces cerevisiae (strain ATCC 204508 / S288c) (Baker's yeast).